We begin with the raw amino-acid sequence, 274 residues long: Eukaryotic translation initiation factor 3 subunit G (274 aa).

The 79-residue stretch at 192 to 270 (TAIRISNLSN…LILNVEWSKP (79 aa)) folds into the RRM domain.

The protein belongs to the eIF-3 subunit G family. As to quaternary structure, component of the eukaryotic translation initiation factor 3 (eIF-3) complex.

It is found in the cytoplasm. RNA-binding component of the eukaryotic translation initiation factor 3 (eIF-3) complex, which is involved in protein synthesis of a specialized repertoire of mRNAs and, together with other initiation factors, stimulates binding of mRNA and methionyl-tRNAi to the 40S ribosome. The eIF-3 complex specifically targets and initiates translation of a subset of mRNAs involved in cell proliferation. This subunit can bind 18S rRNA. The chain is Eukaryotic translation initiation factor 3 subunit G from Bombyx mori (Silk moth).